Reading from the N-terminus, the 280-residue chain is L-proline cis-4-hydroxylase (280 aa).

The Fe cation site is built by histidine 106, aspartate 108, and histidine 154. Arginine 164 provides a ligand contact to 2-oxoglutarate.

This sequence belongs to the L-proline cis-4-/cis-3-hydroxylase family. Fe(2+) is required as a cofactor.

The catalysed reaction is L-proline + 2-oxoglutarate + O2 = cis-4-hydroxy-L-proline + succinate + CO2. Its activity is regulated as follows. Inhibited by metal ions such as Co(2+), Zn(2+), Cu(2+) or Ni(2+). Is also inhibited by EDTA or diethylpyrocarbonate (DEPC) in vitro. Unlike the procollagen-proline cis-3- and trans-4-hydroxylases from mammals, does not necessarily require L-ascorbate for activity although it does increase the activity of the enzyme. Functionally, dioxygenase that catalyzes the 2-oxoglutarate-dependent selective hydroxylation of free L-proline to cis-4-hydroxy-L-proline (cis-4-Hyp). The chain is L-proline cis-4-hydroxylase from Rhizobium meliloti (strain 1021) (Ensifer meliloti).